The chain runs to 531 residues: rRNA methyltransferase 1, mitochondrial (531 aa).

The N-terminal 40 residues, 1-40 (MISIFKILSSPKPATTTTNIINPINIINGIRYFSSNQEDY), are a transit peptide targeting the mitochondrion. Disordered regions lie at residues 70–141 (ESHY…RTEY) and 230–277 (IEDE…KKTT). The segment covering 74–136 (NNNNNSNNNS…NNFRNNNNNN (63 aa)) has biased composition (low complexity). Acidic residues predominate over residues 247–267 (EQNEYEEEQEEEKVQEEEEDN).

This sequence belongs to the class IV-like SAM-binding methyltransferase superfamily. RNA methyltransferase TrmH family.

It localises to the mitochondrion. It carries out the reaction a uridine in rRNA + S-adenosyl-L-methionine = a 2'-O-methyluridine in rRNA + S-adenosyl-L-homocysteine + H(+). In terms of biological role, S-adenosyl-L-methionine-dependent 2'-O-ribose methyltransferase that catalyzes the formation of a 2'-O-methylguanosine in the mitochondrial large subunit ribosomal RNA (mtLSU rRNA), a universally conserved modification in the peptidyl transferase domain of the mtLSU rRNA. The polypeptide is rRNA methyltransferase 1, mitochondrial (mrm1) (Dictyostelium discoideum (Social amoeba)).